Consider the following 237-residue polypeptide: Ribosomal RNA small subunit methyltransferase G (237 aa).

The interval Met1–Thr25 is disordered. Over residues Pro7–Ala21 the composition is skewed to low complexity. S-adenosyl-L-methionine contacts are provided by Gly85, Phe90, and Arg155.

It belongs to the methyltransferase superfamily. RNA methyltransferase RsmG family.

Its subcellular location is the cytoplasm. It carries out the reaction guanosine(527) in 16S rRNA + S-adenosyl-L-methionine = N(7)-methylguanosine(527) in 16S rRNA + S-adenosyl-L-homocysteine. Its function is as follows. Specifically methylates the N7 position of guanine in position 527 of 16S rRNA. This Rhodopseudomonas palustris (strain HaA2) protein is Ribosomal RNA small subunit methyltransferase G.